Consider the following 509-residue polypeptide: Putative ATP-dependent RNA helicase QP509L (509 aa).

Residues 110–262 (KKLLSPYGRF…KIILHHLGQP (153 aa)) form the Helicase ATP-binding domain. 123–130 (LNTGLGKT) contributes to the ATP binding site. A DEAH box motif is present at residues 215–218 (DEAH).

Belongs to the DEAD box helicase family. DEAH subfamily.

The catalysed reaction is ATP + H2O = ADP + phosphate + H(+). The protein is Putative ATP-dependent RNA helicase QP509L of Ornithodoros (relapsing fever ticks).